The primary structure comprises 246 residues: Bis(5'-nucleosyl)-tetraphosphatase PrpE [asymmetrical] (246 aa).

This sequence belongs to the PrpE family. Ni(2+) serves as cofactor.

It carries out the reaction P(1),P(4)-bis(5'-guanosyl) tetraphosphate + H2O = GMP + GTP + 2 H(+). Asymmetrically hydrolyzes Ap4p to yield AMP and ATP. The protein is Bis(5'-nucleosyl)-tetraphosphatase PrpE [asymmetrical] of Bacillus cereus (strain B4264).